The sequence spans 332 residues: Anthranilate phosphoribosyltransferase (332 aa).

5-phospho-alpha-D-ribose 1-diphosphate-binding positions include G78, 81 to 82 (GD), S86, 88 to 91 (NIST), 106 to 114 (KHGNKSITS), and S118. Position 78 (G78) interacts with anthranilate. Residue S90 participates in Mg(2+) binding. N109 is an anthranilate binding site. R163 contributes to the anthranilate binding site. Residues D222 and E223 each coordinate Mg(2+).

This sequence belongs to the anthranilate phosphoribosyltransferase family. Homodimer. The cofactor is Mg(2+).

It catalyses the reaction N-(5-phospho-beta-D-ribosyl)anthranilate + diphosphate = 5-phospho-alpha-D-ribose 1-diphosphate + anthranilate. Its pathway is amino-acid biosynthesis; L-tryptophan biosynthesis; L-tryptophan from chorismate: step 2/5. Functionally, catalyzes the transfer of the phosphoribosyl group of 5-phosphorylribose-1-pyrophosphate (PRPP) to anthranilate to yield N-(5'-phosphoribosyl)-anthranilate (PRA). This Staphylococcus aureus (strain Mu3 / ATCC 700698) protein is Anthranilate phosphoribosyltransferase.